We begin with the raw amino-acid sequence, 941 residues long: MALTPMMVEYMKTKEEYNDCILFYRLGDFYEMFFDDALTVSRELELVLTGKNCGLEERAPMCGIPHHAAAAYIPRLVTKGYKVAICEQLEDPKQSKGIVKRGVVKVITPGTFIDSNSNLENDNTYLMVISEHEDKFGIAMSDISTGEFKTTSFNNIKMSLLDEISKVSPKEILVDNNISEDLLEEINNVLPVLITKKDFNEFLVSKEELIEQFSDLEVSGLTIEREIPSKVLLKYINETQKMSLTNINLLEQYEIINYMTIDGNSRRNLELTESIREKTKKGSLLWVLDKSATSMGGRTLRKWIDEPLIVKDEIEKRLSGVEEVFNSIGFNEDLRSALKEIYDIERIVGKISNKNVNAKDLLSLKSSLDKLPCIKKLLKDTSSELLKGYYENLDELIDVRDLLNDSIKEDPGLGLKEGNIIKDGYNNLVDELRQSKLHGKEWIAALENREREFTGIKSLKVGYNKVFGYYIEISKSNYNSIPEGRYIRKQTLANAERFITEELKVMEDKILGSEEKLINLEYSIFVEIRDKIEKEISRLKKSARIISDLDGISTLALVALENDYIKPEINTNGLIKITDGRHPVVEKVIGKGDFVSNNTALNQTDKELLLITGPNMAGKSTYMRQVALITLMAQMGSFVPATSANISICDKIFTRIGASDDLAGGKSTFMVEMWEVSNILKNATSNSLVLLDEVGRGTSTYDGLSIAWSVIEYITKNKNLRCKTLFATHYHELVKLEGILPGVKNYSVAVKKLKDSVVFLRKIVEGGADESYGIEVAKLAGLPENVINRAREILEDLESKNTFDINKLSSCSMVSNNTKEIAADSIKNEEDKVISNAQNIDVNETNCNYNEEKILKIETQNSEYEETIKFLKSEIKELQESNKKHNKKHKDASNDNMQINFEVMEKENFIKEISDVDILNLNPMEAMNTLYKVVTDAKKLQ.

613–620 lines the ATP pocket; that stretch reads GPNMAGKS.

Belongs to the DNA mismatch repair MutS family.

Functionally, this protein is involved in the repair of mismatches in DNA. It is possible that it carries out the mismatch recognition step. This protein has a weak ATPase activity. This Clostridium botulinum (strain Alaska E43 / Type E3) protein is DNA mismatch repair protein MutS.